The sequence spans 162 residues: NRR repressor homolog 3 (162 aa).

Residues 1–80 form a disordered region; the sequence is MDPTMPTPHT…GHEEEARDED (80 aa). The span at 7–24 shows a compositional bias: polar residues; that stretch reads TPHTISGTSPFPRNSSTA. Residues 37-46 show a composition bias toward basic residues; the sequence is PRHRRSRKRD. Basic and acidic residues predominate over residues 69-80; the sequence is GHGHEEEARDED.

Belongs to the NPR1-interactor family. As to quaternary structure, interacts with NPR1/NH1. Interacts with NPR3/NH3.

The protein localises to the nucleus. Binds to and represses NPR1/NH1-mediated transcriptional activation of LG2 in vitro. This Oryza sativa subsp. japonica (Rice) protein is NRR repressor homolog 3.